The primary structure comprises 681 residues: Heat shock 70 kDa protein (681 aa).

Residues 655 to 665 (NFPGGMPGAGM) show a composition bias toward gly residues. The tract at residues 655–681 (NFPGGMPGAGMPGNAPAGSGPTVEEVD) is disordered. Low complexity predominate over residues 666–675 (PGNAPAGSGP).

It belongs to the heat shock protein 70 family.

This is Heat shock 70 kDa protein from Plasmodium falciparum.